The primary structure comprises 296 residues: 4-hydroxy-tetrahydrodipicolinate synthase (296 aa).

Pyruvate is bound at residue threonine 49. The active-site Proton donor/acceptor is tyrosine 137. Catalysis depends on lysine 166, which acts as the Schiff-base intermediate with substrate. Position 208 (isoleucine 208) interacts with pyruvate.

It belongs to the DapA family. Homotetramer; dimer of dimers.

The protein resides in the cytoplasm. The catalysed reaction is L-aspartate 4-semialdehyde + pyruvate = (2S,4S)-4-hydroxy-2,3,4,5-tetrahydrodipicolinate + H2O + H(+). Its pathway is amino-acid biosynthesis; L-lysine biosynthesis via DAP pathway; (S)-tetrahydrodipicolinate from L-aspartate: step 3/4. Catalyzes the condensation of (S)-aspartate-beta-semialdehyde [(S)-ASA] and pyruvate to 4-hydroxy-tetrahydrodipicolinate (HTPA). The chain is 4-hydroxy-tetrahydrodipicolinate synthase from Chlorobium chlorochromatii (strain CaD3).